Here is a 405-residue protein sequence, read N- to C-terminus: Transcriptional regulatory protein DEP1 (405 aa).

The span at 1–12 shows a compositional bias: low complexity; it reads MSQQTPQESEQT. Disordered regions lie at residues 1–26 and 49–171; these read MSQQ…SVLS and AGTE…VMPS. Ser-56 carries the post-translational modification Phosphoserine. Composition is skewed to basic and acidic residues over residues 86–108 and 116–139; these read SLKR…KVPG and EEEK…ARDE. Ser-120 carries the phosphoserine modification. Residues 140–157 are compositionally biased toward acidic residues; the sequence is QGDEGDNEEENNEEDNEN. Ser-370 carries the post-translational modification Phosphoserine.

In terms of assembly, component of the RPD3C(L) complex composed of at least ASH1, CTI6, DEP1, PHO23, RPD3, RXT2, RXT3, SAP30, SDS3, SIN3, UME1 and UME6.

It is found in the cytoplasm. It localises to the nucleus. Its function is as follows. Component of the RPD3C(L) histone deacetylase complex (HDAC) responsible for the deacetylation of lysine residues on the N-terminal part of the core histones (H2A, H2B, H3 and H4). Histone deacetylation gives a tag for epigenetic repression and plays an important role in transcriptional regulation, cell cycle progression and developmental events. This chain is Transcriptional regulatory protein DEP1 (DEP1), found in Saccharomyces cerevisiae (strain ATCC 204508 / S288c) (Baker's yeast).